Here is a 195-residue protein sequence, read N- to C-terminus: Putative lysine exporter (195 aa).

Transmembrane regions (helical) follow at residues 4 to 24 (LLSAVIIGIVLGWLCKDWLHF), 30 to 50 (LYVLITLIFFVGIQLRNNGIS), 61 to 81 (LMMGAIFTLSSLIGGVISAFF), 86 to 106 (ITQGLAFSSGFGWYSLSSVVL), 117 to 137 (IAFFNDLSREILSLFLIPLFM), and 170 to 190 (PIAISFGMVTNLLPPLLLVFF).

The protein belongs to the LysO family.

It localises to the cell inner membrane. Its function is as follows. Mediates export of lysine. The protein is Putative lysine exporter of Haemophilus influenzae (strain ATCC 51907 / DSM 11121 / KW20 / Rd).